A 178-amino-acid polypeptide reads, in one-letter code: MTTDTHTLHIEEILDLLPHRFPFLLVDRVLDFEEGKFLRAVKNVSFNEPFFQGHFPGKPIFPGVLILEAMAQATGILAFKSRGKLEPGELYYFAGIDEARFKRPVVPGDQMIMEVEFVKERRGLTRFTGVAKVDGEIVCTATMMCARSKPATAVVIKSEVTKSEGTKSEVGKPDVKES.

Residue H54 is part of the active site.

The protein belongs to the thioester dehydratase family. FabZ subfamily.

It is found in the cytoplasm. The enzyme catalyses a (3R)-hydroxyacyl-[ACP] = a (2E)-enoyl-[ACP] + H2O. Its function is as follows. Involved in unsaturated fatty acids biosynthesis. Catalyzes the dehydration of short chain beta-hydroxyacyl-ACPs and long chain saturated and unsaturated beta-hydroxyacyl-ACPs. The chain is 3-hydroxyacyl-[acyl-carrier-protein] dehydratase FabZ from Yersinia enterocolitica.